The following is a 338-amino-acid chain: Large ribosomal subunit protein uL10 (338 aa).

Residues 292 to 338 (LDDDLKERVSSTASAVEAKEEEAPKEEKEEEKEEEEEAPAAGLGMLF) form a disordered region. Residues 308 to 318 (EAKEEEAPKEE) are compositionally biased toward basic and acidic residues. The segment covering 319 to 329 (KEEEKEEEEEA) has biased composition (acidic residues).

Belongs to the universal ribosomal protein uL10 family. Part of the 50S ribosomal subunit. Forms part of the ribosomal stalk which helps the ribosome interact with GTP-bound translation factors. Forms a heptameric L10(L12)2(L12)2(L12)2 complex, where L10 forms an elongated spine to which the L12 dimers bind in a sequential fashion.

Its function is as follows. Forms part of the ribosomal stalk, playing a central role in the interaction of the ribosome with GTP-bound translation factors. The polypeptide is Large ribosomal subunit protein uL10 (Methanococcus aeolicus (strain ATCC BAA-1280 / DSM 17508 / OCM 812 / Nankai-3)).